The following is a 426-amino-acid chain: Gamma-glutamyl phosphate reductase (426 aa).

It belongs to the gamma-glutamyl phosphate reductase family.

The protein resides in the cytoplasm. The enzyme catalyses L-glutamate 5-semialdehyde + phosphate + NADP(+) = L-glutamyl 5-phosphate + NADPH + H(+). The protein operates within amino-acid biosynthesis; L-proline biosynthesis; L-glutamate 5-semialdehyde from L-glutamate: step 2/2. Catalyzes the NADPH-dependent reduction of L-glutamate 5-phosphate into L-glutamate 5-semialdehyde and phosphate. The product spontaneously undergoes cyclization to form 1-pyrroline-5-carboxylate. This chain is Gamma-glutamyl phosphate reductase, found in Paracidovorax citrulli (strain AAC00-1) (Acidovorax citrulli).